A 732-amino-acid chain; its full sequence is Cullin-3A (732 aa).

In terms of domain architecture, Cullin neddylation spans 662–724; sequence DRKPQIEAAI…RDFLERDSTD (63 aa). A Glycyl lysine isopeptide (Lys-Gly) (interchain with G-Cter in NEDD8) cross-link involves residue Lys-676.

Belongs to the cullin family. In terms of assembly, interacts with CSN2 and RBX1A. Interacts with BTB/POZ domain-containing proteins BPM1, BPM2, BPM3, BPM6, BT1, BT2, BT3, BT5, AT1G01640, AT1G21780 and AT5G48510. Interacts with SR1IP1. Interacts with NPR3 and NPR4. Binds to NPR1; this interaction requires NPR3 and NPR4. Post-translationally, neddylated. Deneddylated via its interaction with the COP9 signalosome (CSN) complex.

Its function is as follows. Component of the cullin-RING ubiquitin ligases (CRL), or CUL3-RBX1-BTB protein E3 ligase complexes which mediate the ubiquitination and subsequent proteasomal degradation of target proteins. The functional specificity of the CRL complex depends on the BTB domain-containing protein as the substrate recognition component. Involved in embryo pattern formation and endosperm development. Required for the normal division and organization of the root stem cells and columella root cap cells. Regulates primary root growth by an unknown pathway, but in an ethylene-dependent manner. Functions in distal root patterning, by an ethylene-independent mechanism. Functionally redundant with CUL3B. In Arabidopsis thaliana (Mouse-ear cress), this protein is Cullin-3A.